Consider the following 347-residue polypeptide: NADH-ubiquinone oxidoreductase chain 2 (347 aa).

The next 9 membrane-spanning stretches (helical) occupy residues 5–22, 26–45, 60–80, 150–170, 178–198, 200–220, 237–257, 274–294, and 327–347; these read ILAIVMSTVISGTIMVLI, WLTIWIGFEMNMLAIIPILM, FLTQATASMLLMLGIIINLLL, NPNLLMAMAIMSVLVGGWGGL, ILAYSSIAHMGWMIAVTTYNP, LMLLNLTIYITMTLGTFMLFM, LPLIASLILMTMLSLGGLPPL, DMAIMATFMAMTALLNLYFYM, and PPLIMISTMLLPLTPMVLTLF.

It belongs to the complex I subunit 2 family. In terms of assembly, core subunit of respiratory chain NADH dehydrogenase (Complex I) which is composed of 45 different subunits. Interacts with TMEM242.

It is found in the mitochondrion inner membrane. The enzyme catalyses a ubiquinone + NADH + 5 H(+)(in) = a ubiquinol + NAD(+) + 4 H(+)(out). Functionally, core subunit of the mitochondrial membrane respiratory chain NADH dehydrogenase (Complex I) which catalyzes electron transfer from NADH through the respiratory chain, using ubiquinone as an electron acceptor. Essential for the catalytic activity and assembly of complex I. The protein is NADH-ubiquinone oxidoreductase chain 2 of Martes zibellina (Sable).